The chain runs to 360 residues: Dual-specificity RNA methyltransferase RlmN (360 aa).

Glu-91 serves as the catalytic Proton acceptor. One can recognise a Radical SAM core domain in the interval 110 to 343 (RSEKYTVCIS…CTIRESKGLD (234 aa)). A disulfide bridge connects residues Cys-117 and Cys-348. [4Fe-4S] cluster is bound by residues Cys-124, Cys-128, and Cys-131. S-adenosyl-L-methionine contacts are provided by residues 174-175 (GE), Ser-206, 229-231 (SLH), and Asn-305. The active-site S-methylcysteine intermediate is Cys-348.

The protein belongs to the radical SAM superfamily. RlmN family. It depends on [4Fe-4S] cluster as a cofactor.

It is found in the cytoplasm. It carries out the reaction adenosine(2503) in 23S rRNA + 2 reduced [2Fe-2S]-[ferredoxin] + 2 S-adenosyl-L-methionine = 2-methyladenosine(2503) in 23S rRNA + 5'-deoxyadenosine + L-methionine + 2 oxidized [2Fe-2S]-[ferredoxin] + S-adenosyl-L-homocysteine. The catalysed reaction is adenosine(37) in tRNA + 2 reduced [2Fe-2S]-[ferredoxin] + 2 S-adenosyl-L-methionine = 2-methyladenosine(37) in tRNA + 5'-deoxyadenosine + L-methionine + 2 oxidized [2Fe-2S]-[ferredoxin] + S-adenosyl-L-homocysteine. In terms of biological role, specifically methylates position 2 of adenine 2503 in 23S rRNA and position 2 of adenine 37 in tRNAs. m2A2503 modification seems to play a crucial role in the proofreading step occurring at the peptidyl transferase center and thus would serve to optimize ribosomal fidelity. The sequence is that of Dual-specificity RNA methyltransferase RlmN from Aliarcobacter butzleri (strain RM4018) (Arcobacter butzleri).